We begin with the raw amino-acid sequence, 59 residues long: Beta-defensin 134 (59 aa).

The N-terminal stretch at 1 to 19 (MKPLLVVFVFLFLWDPVLA) is a signal peptide. 3 disulfides stabilise this stretch: Cys-25–Cys-51, Cys-31–Cys-45, and Cys-35–Cys-52.

It belongs to the beta-defensin family.

It localises to the secreted. Its function is as follows. Has antibacterial activity. The protein is Beta-defensin 134 (DEFB134) of Pan troglodytes (Chimpanzee).